We begin with the raw amino-acid sequence, 528 residues long: Na(+)/H(+) antiporter NhaB (528 aa).

Residues 1–23 lie on the Cytoplasmic side of the membrane; sequence MPISLGNAFIKNFLGKAPDWYKV. The chain crosses the membrane as a helical span at residues 24–46; that stretch reads AIIAFLIINPIVFFLINPFVAGW. The Periplasmic portion of the chain corresponds to 47–95; it reads LLVAEFIFTLAMALKCYPLQPGGLLAIEAIAIGMTSPAQVKHELVANIE. Residues 96-118 form a helical membrane-spanning segment; sequence VLLLLVFMVAGIYFMKHLLLFIF. The Cytoplasmic segment spans residues 119 to 129; it reads TKILLGIRSKT. A helical transmembrane segment spans residues 130–163; it reads LLSLAFCFAAAFLSAFLDALTVIAVVISVAIGFY. Topologically, residues 164-239 are periplasmic; it reads SIYHKVASGN…ADQAGWLFGE (76 aa). A helical membrane pass occupies residues 240–262; the sequence is FLIRMSPVTLPVFFCGLITCALV. The Cytoplasmic portion of the chain corresponds to 263-297; sequence EKLKVFGYGAKLPNNVRQILVDFDNEERKTRTNQD. Residues 298 to 317 traverse the membrane as a helical segment; the sequence is VAKLWVQGLIAVWLIVALAL. Over 318–320 the chain is Periplasmic; it reads HLA. The helical transmembrane segment at 321–340 threads the bilayer; that stretch reads AVGLIGLSVIILATAFTGVI. Topologically, residues 341–352 are cytoplasmic; it reads EEHSMGKAFEEA. The chain crosses the membrane as a helical span at residues 353 to 375; the sequence is LPFTALLAVFFSIVAVIIDQELF. At 376-389 the chain is on the periplasmic side; the sequence is KPVIDAVLAVEDKG. The chain crosses the membrane as a helical span at residues 390-412; sequence TQLALFYVANGLLSMVSDNVFVG. The Cytoplasmic segment spans residues 413 to 477; the sequence is TVYINEVKTA…PLIRLSYGRM (65 aa). The helical transmembrane segment at 478–500 threads the bilayer; the sequence is VIMALPYTIVLAIVGLMGIMFFL. The Periplasmic segment spans residues 501–528; sequence EPATASFYDAGWILPHSGDLTPVVSGGH.

This sequence belongs to the NhaB Na(+)/H(+) (TC 2.A.34) antiporter family.

It localises to the cell inner membrane. It carries out the reaction 2 Na(+)(in) + 3 H(+)(out) = 2 Na(+)(out) + 3 H(+)(in). In terms of biological role, na(+)/H(+) antiporter that extrudes sodium in exchange for external protons. The polypeptide is Na(+)/H(+) antiporter NhaB (Vibrio alginolyticus).